Consider the following 141-residue polypeptide: Hemoglobin subunit alpha-A (141 aa).

Residues 1 to 141 (VLTEEDKSRV…VAKTLVSRYR (141 aa)) enclose the Globin domain. His-58 contributes to the O2 binding site. His-87 is a heme b binding site.

The protein belongs to the globin family. Heterotetramer of two alpha chains and two beta chains. Red blood cells.

In terms of biological role, involved in oxygen transport from the lung to the various peripheral tissues. The polypeptide is Hemoglobin subunit alpha-A (Drymarchon melanurus erebennus (Texas indigo snake)).